Consider the following 131-residue polypeptide: Inactive protein FON2 SPARE1 (131 aa).

The segment at 67 to 131 is disordered; sequence SPSSLTTTDR…VPTGPNPLHH (65 aa). The segment covering 76 to 97 has biased composition (basic residues); sequence RHHHHHRHHGHHHHRGHDRWNR.

It belongs to the CLV3/ESR signal peptide family. In terms of tissue distribution, expressed in all aerial apical meristems, including the floral and inflorescence meristems in the reproductive phase and the shoot apical meristem in the vegetative phase. Also detected in the primordia of lateral organs such as the leaf and the floral organs.

Functionally, non functional suppressor of the fon2 mutation. In Oryza sativa subsp. japonica, the protein has a single amino acid substitution at the putative processing site of the signal peptide while in all the other varieties/species of domesticated and wild rice tested the protein is functional. This Oryza sativa subsp. japonica (Rice) protein is Inactive protein FON2 SPARE1 (FOS1).